The primary structure comprises 798 residues: ATP-dependent RecD2 DNA helicase (798 aa).

Position 370–374 (370–374 (GTGKT)) interacts with ATP.

The protein belongs to the RecD family. RecD2 subfamily. Interacts with SSB (sbbA).

It localises to the cytoplasm. The protein resides in the nucleoid. It catalyses the reaction Couples ATP hydrolysis with the unwinding of duplex DNA at the replication fork by translocating in the 5'-3' direction. This creates two antiparallel DNA single strands (ssDNA). The leading ssDNA polymer is the template for DNA polymerase III holoenzyme which synthesizes a continuous strand.. The enzyme catalyses ATP + H2O = ADP + phosphate + H(+). In vivo may favor replication restart by preventing RecA from binding to blocked replication forks, avoiding unnecessary recombination during replication restart. Acts as a negative modulator of the RecA-ssDNA filament, may dissasemble RecA threads, can act as both a positive and negative regulator of strand exchange. Probably stabilizes or aids normal replication fork progression, is important for survival after treatment with DNA-damaging agents that can result in replication fork stress. Overcomes the inhibition of replication restart by RecA/RecO, probably by displacing RecA. Increasing levels inhibit PriA-dependent DNA replication initiation (but have little effect on ongoing replication) in vitro; may act by disturbing SsbA assembly. Probably has a role in recombinational DNA repair. Does not seem to contribute to mismatch repair. Has 5'-3' helicase activity that is probably ATP-dependent. The chain is ATP-dependent RecD2 DNA helicase from Bacillus subtilis (strain 168).